We begin with the raw amino-acid sequence, 842 residues long: Protein translocase subunit SecA (842 aa).

ATP is bound by residues glutamine 85, 103–107, and aspartate 493; that span reads GEGKT. The Zn(2+) site is built by cysteine 825, cysteine 827, cysteine 836, and histidine 837.

Belongs to the SecA family. In terms of assembly, monomer and homodimer. Part of the essential Sec protein translocation apparatus which comprises SecA, SecYEG and auxiliary proteins SecDF. Other proteins may also be involved. Requires Zn(2+) as cofactor.

It localises to the cell membrane. It is found in the cytoplasm. The enzyme catalyses ATP + H2O + cellular proteinSide 1 = ADP + phosphate + cellular proteinSide 2.. Its function is as follows. Part of the Sec protein translocase complex. Interacts with the SecYEG preprotein conducting channel. Has a central role in coupling the hydrolysis of ATP to the transfer of proteins into and across the cell membrane, serving as an ATP-driven molecular motor driving the stepwise translocation of polypeptide chains across the membrane. In Streptococcus equi subsp. zooepidemicus (strain H70), this protein is Protein translocase subunit SecA.